Consider the following 108-residue polypeptide: Bublin coiled-coil protein (108 aa).

Disordered regions lie at residues 1–23 (MSGPNGDPNISVEDGLINDDDDF) and 67–108 (RLEF…DEGS). The stretch at 25–73 (SEEYEAINSMLDQINSYLDDLEERNDSLNGKLHELMESNRQARLEFRAQ) forms a coiled coil. Over residues 99-108 (ENDKKIDEGS) the composition is skewed to basic and acidic residues.

It belongs to the UPF0184 (EST00098) family.

The protein localises to the cell junction. It localises to the cytoplasm. The protein resides in the cytoskeleton. In terms of biological role, essential for intermediate filament organization in intestinal cells, interacts with intermediate filament and regulates intestinal lumen morphology. The chain is Bublin coiled-coil protein (bbln) from Takifugu rubripes (Japanese pufferfish).